We begin with the raw amino-acid sequence, 465 residues long: Probable zinc metalloprotease PTT_17836 (465 aa).

An N-terminal signal peptide occupies residues 1 to 20 (MRSASTLAVCAATLLQIACS). The N-linked (GlcNAc...) asparagine glycan is linked to Asn-140. His-163, Asp-183, and Glu-216 together coordinate Zn(2+). N-linked (GlcNAc...) asparagine glycosylation is present at Asn-231. Asp-243 is a Zn(2+) binding site. 6 N-linked (GlcNAc...) asparagine glycosylation sites follow: Asn-272, Asn-330, Asn-378, Asn-384, Asn-421, and Asn-426. The region spanning 371-464 (APTNVGVNTT…LPFPFGCARN (94 aa)) is the Fibronectin type-III domain.

Belongs to the peptidase M28 family. M28B subfamily. Requires Zn(2+) as cofactor.

It is found in the secreted. This is Probable zinc metalloprotease PTT_17836 from Pyrenophora teres f. teres (strain 0-1) (Barley net blotch fungus).